Here is a 560-residue protein sequence, read N- to C-terminus: NAD-dependent malic enzyme (560 aa).

Tyrosine 100 (proton donor) is an active-site residue. Arginine 153 serves as a coordination point for NAD(+). The Proton acceptor role is filled by lysine 171. A divalent metal cation-binding residues include glutamate 242, aspartate 243, and aspartate 266. NAD(+)-binding residues include aspartate 266 and asparagine 413.

This sequence belongs to the malic enzymes family. Homotetramer. The cofactor is Mg(2+). Mn(2+) serves as cofactor.

The enzyme catalyses (S)-malate + NAD(+) = pyruvate + CO2 + NADH. It catalyses the reaction oxaloacetate + H(+) = pyruvate + CO2. This Psychrobacter cryohalolentis (strain ATCC BAA-1226 / DSM 17306 / VKM B-2378 / K5) protein is NAD-dependent malic enzyme.